The chain runs to 227 residues: Albumin-2 (227 aa).

Hemopexin repeat units follow at residues 3 to 46 (PGYI…GPTP), 61 to 111 (SYGI…FPFF), 117 to 165 (ESGI…YPCF), and 171 to 221 (ESGA…WPSL). Residues Asn-7 and Asp-65 each coordinate Ca(2+). Ser-118 is a binding site for spermine. Ca(2+) contacts are provided by Asp-121 and Asp-175.

Monomer and homodimer. Dimers are prevalent in solution.

The protein localises to the cytoplasm. It is found in the cytosol. Its function is as follows. May play a role in response to oxidative stress and polyamine biosynthesis. The monomeric form binds one hemin per monomer. In the dimeric form, about half of the dimers bind one molecule of spermine each under physiological conditions. Ligand binding is mutually exclusive as binding of hemin leads to dissociation of the dimer. This is Albumin-2 from Lathyrus sativus (White vetchling).